Here is a 425-residue protein sequence, read N- to C-terminus: C2H2 type master regulator of conidiophore development brlA (425 aa).

Disordered regions lie at residues 28-72, 232-257, and 281-301; these read MASS…RHTG, KTHS…PMSR, and VQRQ…SLSL. Positions 30-44 are enriched in low complexity; the sequence is SSFSPMESPTPTPTS. The segment covering 232 to 256 has biased composition (polar residues); sequence KTHSPTTPVRSCSLGTTSGTDTPMS. Positions 285–294 are enriched in basic residues; the sequence is PSRKVARKQS. 2 consecutive C2H2-type zinc fingers follow at residues 321–345 and 351–376; these read KGRF…PHVC and ERAF…GRNR. Residues 365–374 are compositionally biased toward basic residues; sequence TKTHSKRGGR. Residues 365-425 are disordered; sequence TKTHSKRGGR…RETSEEAWLE (61 aa).

The protein localises to the nucleus. BrlA, abaA and wetA are pivotal regulators of conidiophore development and conidium maturation. They act individually and together to regulate their own expression and that of numerous other sporulation-specific genes. Binds promoters of target genes at brlA response elements (BREs) containing the conserved sequence 5'-(C/A)(A/G)AGGG(G/A)-3'. Also coordinates the expression of carbohydrate-active enzymes and of the key effectors of cell wall remodeling during autolysis. The polypeptide is C2H2 type master regulator of conidiophore development brlA (Aspergillus niger (strain ATCC MYA-4892 / CBS 513.88 / FGSC A1513)).